We begin with the raw amino-acid sequence, 456 residues long: Chaperone protein dnaJ GFA2, mitochondrial (456 aa).

The N-terminal 89 residues, 1 to 89 (MVPSNGAKVL…RSFHGTGSSF (89 aa)), are a transit peptide targeting the mitochondrion. The J domain maps to 94–159 (DYYSVLGVSK…EKRDLYDQVG (66 aa)). A CR-type zinc finger spans residues 225–303 (GCSKTVTFQT…CRGARVVRGQ (79 aa)). The Zn(2+) site is built by C238, C241, C255, C258, C277, C280, C291, and C294. CXXCXGXG motif repeat units follow at residues 238–245 (CNTCGGQG), 255–262 (CKACNGSG), 277–284 (CQKCGGAG), and 291–298 (CKSCRGAR).

It belongs to the DnaJ family. In terms of tissue distribution, widely expressed.

It localises to the mitochondrion. Functionally, chaperone that may play a role in mitochondrial protein folding. Involved in female gametophyte development. Required for cell death of the synergid cells during fertilization process, and fusion of the polar nuclei during megagametogenesis. The sequence is that of Chaperone protein dnaJ GFA2, mitochondrial from Arabidopsis thaliana (Mouse-ear cress).